The chain runs to 213 residues: Phosphatidylserine decarboxylase proenzyme (213 aa).

The active-site Schiff-base intermediate with substrate; via pyruvic acid is the serine 182. The residue at position 182 (serine 182) is a Pyruvic acid (Ser); by autocatalysis.

The protein belongs to the phosphatidylserine decarboxylase family. PSD-A subfamily. As to quaternary structure, heterodimer of a large membrane-associated beta subunit and a small pyruvoyl-containing alpha subunit. Requires pyruvate as cofactor. In terms of processing, is synthesized initially as an inactive proenzyme. Formation of the active enzyme involves a self-maturation process in which the active site pyruvoyl group is generated from an internal serine residue via an autocatalytic post-translational modification. Two non-identical subunits are generated from the proenzyme in this reaction, and the pyruvate is formed at the N-terminus of the alpha chain, which is derived from the carboxyl end of the proenzyme. The post-translation cleavage follows an unusual pathway, termed non-hydrolytic serinolysis, in which the side chain hydroxyl group of the serine supplies its oxygen atom to form the C-terminus of the beta chain, while the remainder of the serine residue undergoes an oxidative deamination to produce ammonia and the pyruvoyl prosthetic group on the alpha chain.

The protein localises to the cell membrane. The catalysed reaction is a 1,2-diacyl-sn-glycero-3-phospho-L-serine + H(+) = a 1,2-diacyl-sn-glycero-3-phosphoethanolamine + CO2. The protein operates within phospholipid metabolism; phosphatidylethanolamine biosynthesis; phosphatidylethanolamine from CDP-diacylglycerol: step 2/2. Catalyzes the formation of phosphatidylethanolamine (PtdEtn) from phosphatidylserine (PtdSer). The polypeptide is Phosphatidylserine decarboxylase proenzyme (Geotalea uraniireducens (strain Rf4) (Geobacter uraniireducens)).